Consider the following 103-residue polypeptide: Integration host factor subunit alpha (103 aa).

Belongs to the bacterial histone-like protein family. Heterodimer of an alpha and a beta chain.

Functionally, this protein is one of the two subunits of integration host factor, a specific DNA-binding protein that functions in genetic recombination as well as in transcriptional and translational control. The sequence is that of Integration host factor subunit alpha from Bartonella bacilliformis (strain ATCC 35685 / KC583 / Herrer 020/F12,63).